Consider the following 283-residue polypeptide: MATKLQDENTPCLAATPSEPRPTVLVFDSGVGGLSVYDEIRRLLPDLHYIYAFDNVAFPYGEKSETFIVERVVEIATAVQQRYPLSLAVIACNTASTVSLPALREKFAFPVVGVVPAIKPAARLTANGVVGLLATRATVKRPYTHELIARFANECQIAMLGSAELVELAEAKLHGDSVSLEELRRILRPWLRMPEPPDTVVLGCTHFPLLRDELLQVLPEGTRLVDSGAAIARRTAWLLEHEAPDAKSTDANIAYCMAMTPGAEQLLPILQRYGFETLEKLPV.

Substrate is bound by residues 28–29 and 60–61; these read DS and YG. The active-site Proton donor/acceptor is Cys92. Position 93–94 (93–94) interacts with substrate; it reads NT. Catalysis depends on Cys204, which acts as the Proton donor/acceptor. Substrate is bound at residue 205–206; it reads TH.

Belongs to the aspartate/glutamate racemases family.

The enzyme catalyses L-glutamate = D-glutamate. It participates in cell wall biogenesis; peptidoglycan biosynthesis. Functionally, provides the (R)-glutamate required for cell wall biosynthesis. This chain is Glutamate racemase, found in Salmonella gallinarum (strain 287/91 / NCTC 13346).